The primary structure comprises 1551 residues: Dual oxidase 1 (1551 aa).

Residues 1–21 (MGFCLALAWTLLVGAWTPLGA) form the signal peptide. At 22–596 (QNPISWEVQR…YFEGSGFGFG (575 aa)) the chain is on the extracellular side. A peroxidase-like; mediates peroxidase activity region spans residues 26 to 593 (SWEVQRFDGW…VRDYFEGSGF (568 aa)). N-linked (GlcNAc...) asparagine glycosylation occurs at Asn-94. The segment at 150–172 (RWDPETGRSPSNPRDPANQVTGW) is disordered. N-linked (GlcNAc...) asparagine glycans are attached at residues Asn-342, Asn-354, Asn-461, and Asn-534. A helical transmembrane segment spans residues 597–617 (VTIGTLCCFPLVSLLSAWIVA). The Cytoplasmic segment spans residues 618–1044 (RLRMRNFKRL…KRFIENYRRH (427 aa)). EF-hand domains lie at 815 to 850 (PQDM…FMKG), 851 to 886 (SPEE…FIEI), and 895 to 930 (QLAE…HNSE). Positions 828, 830, 832, 834, 839, 864, 866, 868, and 875 each coordinate Ca(2+). Positions 956 to 1248 (YISQDMICPS…GSFALIQLPR (293 aa)) are interaction with TXNDC11. Residues 1045 to 1065 (IGCVAVFYAIAGGLFLERAYY) traverse the membrane as a helical segment. The Extracellular segment spans residues 1066 to 1080 (YAFAAHHTGITDTTR). The helical transmembrane segment at 1081 to 1101 (VGIILSRGTAASISFMFSYIL) threads the bilayer. The region spanning 1087-1269 (RGTAASISFM…YGGDKLVSLS (183 aa)) is the Ferric oxidoreductase domain. Topologically, residues 1102–1148 (LTMCRNLITFLRETFLNRYVPFDAAVDFHRLIASTAIVLTVLHSVGH) are cytoplasmic. The chain crosses the membrane as a helical span at residues 1149–1171 (VVNVYLFSISPLSVLSCLFPGLF). At 1172 to 1188 (HDDGSELPQKYYWWFFQ) the chain is on the extracellular side. Residues 1189 to 1209 (TVPGLTGVVLLLILAIMYVFA) traverse the membrane as a helical segment. At 1210-1226 (SHHFRRRSFRGFWLTHH) the chain is on the cytoplasmic side. The chain crosses the membrane as a helical span at residues 1227–1247 (LYILLYVLLIIHGSFALIQLP). Residue Arg-1248 is a topological domain, extracellular. A helical transmembrane segment spans residues 1249–1269 (FHIFFLVPAIIYGGDKLVSLS). The 107-residue stretch at 1270–1376 (RKKVEISVVK…DGPFGEGHQE (107 aa)) folds into the FAD-binding FR-type domain. Topologically, residues 1270–1551 (RKKVEISVVK…THFSHHYENF (282 aa)) are cytoplasmic.

It in the N-terminal section; belongs to the peroxidase family. As to quaternary structure, interacts with TXNDC11, TPO and CYBA. N-glycosylated. Expressed in thyrocytes and tracheal surface epithelial cells (at protein level). Expressed in thyroid, trachea, bronchium, and to a lower extent, in placenta, testis, prostate, pancreas and heart.

It is found in the apical cell membrane. It carries out the reaction NADH + O2 + H(+) = H2O2 + NAD(+). The catalysed reaction is NADPH + O2 + H(+) = H2O2 + NADP(+). It participates in hormone biosynthesis; thyroid hormone biosynthesis. The NADPH oxidase activity is calcium-dependent. Peroxidase activity is inhibited by aminobenzohydrazide. In terms of biological role, generates hydrogen peroxide which is required for the activity of thyroid peroxidase/TPO and lactoperoxidase/LPO. Plays a role in thyroid hormones synthesis and lactoperoxidase-mediated antimicrobial defense at the surface of mucosa. May have its own peroxidase activity through its N-terminal peroxidase-like domain. In Homo sapiens (Human), this protein is Dual oxidase 1 (DUOX1).